A 780-amino-acid polypeptide reads, in one-letter code: Calpain clp-1 (780 aa).

Residues 269 to 282 are compositionally biased toward basic and acidic residues; it reads DVDPFVRPGPDPDR. The interval 269 to 300 is disordered; sequence DVDPFVRPGPDPDRGGGGSGPSPISPRPTTEP. Residues 316–611 enclose the Calpain catalytic domain; that stretch reads LFEDPQFLAN…FEKMEICNLG (296 aa). Residues Cys371, His527, and Asn551 contribute to the active site.

It belongs to the peptidase C2 family. In terms of tissue distribution, expressed in muscle and neuronal tissues. Expressed in the ventral and dorsal nerve cord, intestinal and hypodermal tissues.

Its subcellular location is the cytoplasm. The protein resides in the myofibril. It is found in the sarcomere. The protein localises to the m line. Calcium-regulated non-lysosomal thiol-protease which catalyzes limited proteolysis of substrates. Required for assembly and maintenance of integrin attachment complexes which are essential for maintenance of adult muscle. Proteolytic activity is activated in response to increased intracellular Ca(2+) levels during cell degeneration and promotes necrotic cell death. The protein is Calpain clp-1 of Caenorhabditis elegans.